A 1031-amino-acid chain; its full sequence is Beta-galactosidase (1031 aa).

Residues Asn-100 and Asp-198 each contribute to the substrate site. Residue Asp-198 coordinates Na(+). Residues Glu-412, His-414, and Glu-457 each coordinate Mg(2+). Residues Glu-457 and 533 to 536 (EYAH) each bind substrate. Catalysis depends on Glu-457, which acts as the Proton donor. The active-site Nucleophile is the Glu-533. Asn-593 lines the Mg(2+) pocket. 2 residues coordinate Na(+): Phe-597 and Asn-600. Positions 600 and 1005 each coordinate substrate.

It belongs to the glycosyl hydrolase 2 family. As to quaternary structure, homotetramer. The cofactor is Mg(2+). It depends on Na(+) as a cofactor.

It carries out the reaction Hydrolysis of terminal non-reducing beta-D-galactose residues in beta-D-galactosides.. This Vibrio vulnificus (strain YJ016) protein is Beta-galactosidase.